A 1323-amino-acid chain; its full sequence is ABC transporter gloK (1323 aa).

Transmembrane regions (helical) follow at residues 6 to 26, 102 to 122, 138 to 158, 217 to 237, 240 to 260, 325 to 345, and 359 to 379; these read AIAS…TLEA, PHAL…AGIL, VAYG…VMST, IWAS…RLGV, VAAV…VFGF, LLVG…VFAF, and PLLA…GQAV. Residues 142–380 enclose the ABC transmembrane type-1 1 domain; sequence LIAAYAIVYI…IFSLLGQAVS (239 aa). The 227-residue stretch at 471-697 folds into the ABC transporter 1 domain; the sequence is IRDCSACWSK…SSYLESLGTR (227 aa). 503-510 lines the ATP pocket; the sequence is GPIGSGKS. The next 7 helical transmembrane spans lie at 748 to 768, 795 to 815, 821 to 841, 859 to 879, 891 to 910, 976 to 996, and 1006 to 1026; these read GWVT…GLVF, YALW…WLMI, AAIQ…LVYF, LIDM…LSCI, YVAA…QLFY, LNLT…SIAL, and IGVA…LVYT. An ABC transmembrane type-1 2 domain is found at 752–1031; the sequence is WWVFVLLCSG…TLVYTWTSLE (280 aa). The 232-residue stretch at 1069-1300 folds into the ABC transporter 2 domain; sequence IRFQSVSAAY…PSFFASLLKA (232 aa). 1103–1110 serves as a coordination point for ATP; it reads GRTGSGKS.

It belongs to the ABC transporter superfamily. ABCC family. Conjugate transporter (TC 3.A.1.208) subfamily.

The protein localises to the cell membrane. Functionally, 3-isopropylmalate dehydratase large subunit; part of the gene cluster that mediates the biosynthesis of pneumocandins, lipohexapeptides of the echinocandin family that prevent fungal cell wall formation by non-competitive inhibition of beta-1,3-glucan synthase. Possibly secretes antifungal pneumocandins, thus avoiding of intracellular accumulation and ameliorating the toxicity to the producing cells. In Glarea lozoyensis (strain ATCC 20868 / MF5171), this protein is ABC transporter gloK.